The chain runs to 465 residues: Probable glycine dehydrogenase (decarboxylating) subunit 1 (465 aa).

Belongs to the GcvP family. N-terminal subunit subfamily. In terms of assembly, the glycine cleavage system is composed of four proteins: P, T, L and H. In this organism, the P 'protein' is a heterodimer of two subunits.

The catalysed reaction is N(6)-[(R)-lipoyl]-L-lysyl-[glycine-cleavage complex H protein] + glycine + H(+) = N(6)-[(R)-S(8)-aminomethyldihydrolipoyl]-L-lysyl-[glycine-cleavage complex H protein] + CO2. The glycine cleavage system catalyzes the degradation of glycine. The P protein binds the alpha-amino group of glycine through its pyridoxal phosphate cofactor; CO(2) is released and the remaining methylamine moiety is then transferred to the lipoamide cofactor of the H protein. This is Probable glycine dehydrogenase (decarboxylating) subunit 1 from Aeropyrum pernix (strain ATCC 700893 / DSM 11879 / JCM 9820 / NBRC 100138 / K1).